The sequence spans 124 residues: Small ribosomal subunit protein uS12 (124 aa).

The interval 1-32 (MPTIQQLVRKGRKDKATKTKTPALKGSPQRRG) is disordered. Asp-89 is subject to 3-methylthioaspartic acid. Positions 105 to 124 (QGVRGRQQARSRYGAKKEKK) are disordered. The segment covering 111–124 (QQARSRYGAKKEKK) has biased composition (basic residues).

Belongs to the universal ribosomal protein uS12 family. As to quaternary structure, part of the 30S ribosomal subunit. Contacts proteins S8 and S17. May interact with IF1 in the 30S initiation complex.

In terms of biological role, with S4 and S5 plays an important role in translational accuracy. Its function is as follows. Interacts with and stabilizes bases of the 16S rRNA that are involved in tRNA selection in the A site and with the mRNA backbone. Located at the interface of the 30S and 50S subunits, it traverses the body of the 30S subunit contacting proteins on the other side and probably holding the rRNA structure together. The combined cluster of proteins S8, S12 and S17 appears to hold together the shoulder and platform of the 30S subunit. In Beutenbergia cavernae (strain ATCC BAA-8 / DSM 12333 / CCUG 43141 / JCM 11478 / NBRC 16432 / NCIMB 13614 / HKI 0122), this protein is Small ribosomal subunit protein uS12.